The primary structure comprises 767 residues: Ribonucleoside-diphosphate reductase subunit alpha (767 aa).

Residues 1-30 (MHPTLISAPISSSANDAHAGTSQGSHQGHR) form a disordered region. Polar residues predominate over residues 9-26 (PISSSANDAHAGTSQGSH). The region spanning 31–120 (IQVIRRDGSS…VWSLWKDTLV (90 aa)) is the ATP-cone domain. Residues Thr-228, 243 to 244 (SC), Gly-272, 460 to 464 (NLCCE), and 631 to 635 (PNTSS) each bind substrate. A disulfide bridge links Cys-244 with Cys-478. Asn-460 (proton acceptor) is an active-site residue. The active-site Cysteine radical intermediate is the Cys-462. Glu-464 (proton acceptor) is an active-site residue.

It belongs to the ribonucleoside diphosphate reductase large chain family. In terms of assembly, tetramer of two alpha and two beta subunits.

It carries out the reaction a 2'-deoxyribonucleoside 5'-diphosphate + [thioredoxin]-disulfide + H2O = a ribonucleoside 5'-diphosphate + [thioredoxin]-dithiol. With respect to regulation, under complex allosteric control mediated by deoxynucleoside triphosphates and ATP binding. The type of nucleotide bound at the specificity site determines substrate preference. It seems probable that ATP makes the enzyme reduce CDP and UDP, dGTP favors ADP reduction and dTTP favors GDP reduction. In terms of biological role, provides the precursors necessary for DNA synthesis. Catalyzes the biosynthesis of deoxyribonucleotides from the corresponding ribonucleotides. The sequence is that of Ribonucleoside-diphosphate reductase subunit alpha (nrdA) from Synechocystis sp. (strain ATCC 27184 / PCC 6803 / Kazusa).